The sequence spans 164 residues: MADENLQPVFQIQRVYLKDLSLEQPNSPAIFLEQDAPVIEVAVDVGAEQLAEGLFESTVTITVTAKINDKVAFLVEAKQAGIFEARNIPDEQLDPLIGIGCPSTIYPYLRANIADAITRAGFPPVHLSEINFEVFYQQRLEALAQQHASNGSGIVMPDGSAAQH.

The protein belongs to the SecB family. As to quaternary structure, homotetramer, a dimer of dimers. One homotetramer interacts with 1 SecA dimer.

The protein localises to the cytoplasm. Its function is as follows. One of the proteins required for the normal export of preproteins out of the cell cytoplasm. It is a molecular chaperone that binds to a subset of precursor proteins, maintaining them in a translocation-competent state. It also specifically binds to its receptor SecA. This Herminiimonas arsenicoxydans protein is Protein-export protein SecB.